The primary structure comprises 137 residues: Large ribosomal subunit protein bL17 (137 aa).

This sequence belongs to the bacterial ribosomal protein bL17 family. As to quaternary structure, part of the 50S ribosomal subunit. Contacts protein L32.

The chain is Large ribosomal subunit protein bL17 from Caulobacter sp. (strain K31).